Reading from the N-terminus, the 199-residue chain is Adenylate kinase (199 aa).

ATP is bound at residue 8 to 13; that stretch reads GAGKGT. An NMP region spans residues 28–57; sequence STGDIFRANIKNKTELGQQVKAIVDAGDYV. AMP contacts are provided by residues threonine 29, arginine 34, 55 to 57, 83 to 86, and glutamine 90; these read DYV and GYPR. An LID region spans residues 124 to 134; it reads KRAREQGRADD. ATP is bound at residue arginine 125. 2 residues coordinate AMP: arginine 131 and arginine 142. Glycine 170 contributes to the ATP binding site.

The protein belongs to the adenylate kinase family. As to quaternary structure, monomer.

It localises to the cytoplasm. It catalyses the reaction AMP + ATP = 2 ADP. It functions in the pathway purine metabolism; AMP biosynthesis via salvage pathway; AMP from ADP: step 1/1. In terms of biological role, catalyzes the reversible transfer of the terminal phosphate group between ATP and AMP. Plays an important role in cellular energy homeostasis and in adenine nucleotide metabolism. The chain is Adenylate kinase from Leifsonia xyli subsp. xyli (strain CTCB07).